The primary structure comprises 488 residues: PTS system mannitol-specific EIICB component (488 aa).

Topologically, residues 1-26 are cytoplasmic; it reads MRKKLAKVKVHIQSLDSLLSSMTMPI. One can recognise a PTS EIIC type-2 domain in the interval 15–362; that stretch reads LDSLLSSMTM…LSLTRKKQLK (348 aa). A helical membrane pass occupies residues 27 to 48; sequence IGIFIAWGLLASFFIPSGWTPD. The Extracellular segment spans residues 49–52; it reads KNLA. A helical transmembrane segment spans residues 53-73; it reads LMVGIGIQYVIPTIIXFFGGK. Topologically, residues 74 to 147 are cytoplasmic; sequence KIYEIRGGVI…SGFEMLVNNF (74 aa). Residues 148 to 169 form a helical membrane-spanning segment; that stretch reads YLGFLGFALIFPSFYLSIYLIG. The Extracellular portion of the chain corresponds to 170–178; that stretch reads YIQLGLKLL. Residues 179–199 form a helical membrane-spanning segment; the sequence is VEIMQQYKLYPIAAIVIEPAK. Over 200-289 the chain is Cytoplasmic; the sequence is VLFLNNAINH…VLLKPVLILA (90 aa). A helical transmembrane segment spans residues 290-309; it reads TIAVGVVGNGILQIFNAGTI. Residues 310-331 are Extracellular-facing; the sequence is APVSPGSVIAGFLQINKTPLDV. Residues 332–353 traverse the membrane as a helical segment; the sequence is AGYALALVLSAVTSLLISLLLL. The Cytoplasmic portion of the chain corresponds to 354–488; that stretch reads SLTRKKQLKT…IIEKIKNEKN (135 aa). Residues 397-488 form the PTS EIIB type-2 domain; the sequence is SQVTFVCDAG…IIEKIKNEKN (92 aa). The Phosphocysteine intermediate; for EIIB activity role is filled by C403. Residue C403 is modified to Phosphocysteine; by EIIA.

As to quaternary structure, homodimer.

Its subcellular location is the cell membrane. The catalysed reaction is D-mannitol(out) + N(pros)-phospho-L-histidyl-[protein] = D-mannitol 1-phosphate(in) + L-histidyl-[protein]. Its function is as follows. The phosphoenolpyruvate-dependent sugar phosphotransferase system (sugar PTS), a major carbohydrate active transport system, catalyzes the phosphorylation of incoming sugar substrates concomitantly with their translocation across the cell membrane. The enzyme II CmtAB PTS system is involved in D-mannitol transport. In Mycoplasma pneumoniae (strain ATCC 29342 / M129 / Subtype 1) (Mycoplasmoides pneumoniae), this protein is PTS system mannitol-specific EIICB component (mtlA).